The chain runs to 299 residues: Probable lipid kinase YegS (299 aa).

Positions 2–133 constitute a DAGKc domain; the sequence is AEFPASLLIL…IDMAQVNKQT (132 aa). ATP-binding positions include T40, 66–72, and T95; that span reads GDGTINE. Mg(2+) contacts are provided by L215, D218, and L220. The Proton acceptor role is filled by E271.

This sequence belongs to the diacylglycerol/lipid kinase family. YegS lipid kinase subfamily. It depends on Mg(2+) as a cofactor. Ca(2+) serves as cofactor.

The protein localises to the cytoplasm. Its function is as follows. Probably phosphorylates lipids; the in vivo substrate is unknown. This is Probable lipid kinase YegS from Shigella boydii serotype 18 (strain CDC 3083-94 / BS512).